The sequence spans 103 residues: MVKQVSDSSEFKSIVCQDKLVVVDFFATWCGPCKAIAPKFEQFSNTYSDATFIKVDVDQLSEIAAEAGVHAMPSFFLYKNGEKIEEIVGANPAKLEASIKANL.

A Thioredoxin domain is found at 2–103 (VKQVSDSSEF…KLEASIKANL (102 aa)). Active-site nucleophile residues include cysteine 30 and cysteine 33. Cysteine 30 and cysteine 33 are oxidised to a cystine.

This sequence belongs to the thioredoxin family.

Its function is as follows. Participates in various redox reactions through the reversible oxidation of its active center dithiol to a disulfide and catalyzes dithiol-disulfide exchange reactions. This Schizosaccharomyces pombe (strain 972 / ATCC 24843) (Fission yeast) protein is Thioredoxin-1 (trx1).